A 202-amino-acid polypeptide reads, in one-letter code: Inner membrane-spanning protein YciB (202 aa).

The next 5 helical transmembrane spans lie at 47-67, 75-95, 101-121, 146-166, and 174-194; these read ILLATVVVIAATVAQIIWVHF, MLWVSLVLVVVFGGLTLAFQN, WKPTILYWVFAGSMIFSAFIL, LSWIGFFLFMGALNLFVAFNF, and FKLFGGMGLMLVFVLGQGMLL.

This sequence belongs to the YciB family.

It is found in the cell inner membrane. Its function is as follows. Plays a role in cell envelope biogenesis, maintenance of cell envelope integrity and membrane homeostasis. This Dechloromonas aromatica (strain RCB) protein is Inner membrane-spanning protein YciB.